An 885-amino-acid polypeptide reads, in one-letter code: Alanine--tRNA ligase (885 aa).

His569, His573, Cys672, and His676 together coordinate Zn(2+).

The protein belongs to the class-II aminoacyl-tRNA synthetase family. The cofactor is Zn(2+).

It localises to the cytoplasm. It carries out the reaction tRNA(Ala) + L-alanine + ATP = L-alanyl-tRNA(Ala) + AMP + diphosphate. In terms of biological role, catalyzes the attachment of alanine to tRNA(Ala) in a two-step reaction: alanine is first activated by ATP to form Ala-AMP and then transferred to the acceptor end of tRNA(Ala). Also edits incorrectly charged Ser-tRNA(Ala) and Gly-tRNA(Ala) via its editing domain. This chain is Alanine--tRNA ligase, found in Chlorobaculum tepidum (strain ATCC 49652 / DSM 12025 / NBRC 103806 / TLS) (Chlorobium tepidum).